The following is a 215-amino-acid chain: Casparian strip membrane protein 3 (215 aa).

A disordered region spans residues 1–26; sequence MDSEKTGEAKITIQEPKAADPKGKGI. Residues 1 to 55 lie on the Cytoplasmic side of the membrane; that stretch reads MDSEKTGEAKITIQEPKAADPKGKGIADAPPPPVVVTTAKAIQKLPRGGWKKGVA. The helical transmembrane segment at 56-76 threads the bilayer; it reads IFDFVVRLCAIATGLAATGIM. Over 77–101 the chain is Extracellular; that stretch reads GTTEQTLPFFTQFFQFHAEYNDLPT. Residues 102 to 122 traverse the membrane as a helical segment; that stretch reads FMFFVFANGIASGYLILSLPF. The Cytoplasmic segment spans residues 123-136; sequence SIVCIVRPLAIVPR. Residues 137–157 form a helical membrane-spanning segment; it reads LLLIIFDTVVMALTIAAASAA. Residues 158–189 lie on the Extracellular side of the membrane; it reads AAIVYLAHNGNSNANWNAICQQFNDFCQQTST. Residues 190–210 traverse the membrane as a helical segment; sequence AVVASFITAAMLTFLIVLSAF. Over 211–215 the chain is Cytoplasmic; that stretch reads ALKRN.

This sequence belongs to the Casparian strip membrane proteins (CASP) family. Homodimer and heterodimers.

The protein resides in the cell membrane. In terms of biological role, regulates membrane-cell wall junctions and localized cell wall deposition. Required for establishment of the Casparian strip membrane domain (CSD) and the subsequent formation of Casparian strips, a cell wall modification of the root endodermis that determines an apoplastic barrier between the intraorganismal apoplasm and the extraorganismal apoplasm and prevents lateral diffusion. This chain is Casparian strip membrane protein 3, found in Ricinus communis (Castor bean).